A 180-amino-acid polypeptide reads, in one-letter code: Ribulose bisphosphate carboxylase small subunit, chloroplastic 5 (180 aa).

A chloroplast-targeting transit peptide spans 1–56; sequence MASSVMSSAAVATRGNGAQASMVAPFTGLKSTASFPVSRKQNLDITSIASNGGRVR.

The protein belongs to the RuBisCO small chain family. In terms of assembly, heterohexadecamer of 8 large and 8 small subunits.

Its subcellular location is the plastid. It localises to the chloroplast. RuBisCO catalyzes two reactions: the carboxylation of D-ribulose 1,5-bisphosphate, the primary event in carbon dioxide fixation, as well as the oxidative fragmentation of the pentose substrate. Both reactions occur simultaneously and in competition at the same active site. Although the small subunit is not catalytic it is essential for maximal activity. The protein is Ribulose bisphosphate carboxylase small subunit, chloroplastic 5 of Solanum tuberosum (Potato).